A 93-amino-acid polypeptide reads, in one-letter code: MTKSELIERLTLKHELPPKQVEASVKEILEQMVQSLSQGKRVEIRGFGSFSLHYRAPRVGRNPKTGDPVELDGKYVPHFKAGKELRERVDTLS.

It belongs to the bacterial histone-like protein family. In terms of assembly, heterodimer of an alpha and a beta chain.

In terms of biological role, this protein is one of the two subunits of integration host factor, a specific DNA-binding protein that functions in genetic recombination as well as in transcriptional and translational control. The polypeptide is Integration host factor subunit beta (Idiomarina loihiensis (strain ATCC BAA-735 / DSM 15497 / L2-TR)).